We begin with the raw amino-acid sequence, 443 residues long: Trigger factor (443 aa).

Positions 164–249 (GDVLCVDFVG…AKSLKKAVDP (86 aa)) constitute a PPIase FKBP-type domain.

Belongs to the FKBP-type PPIase family. Tig subfamily.

Its subcellular location is the cytoplasm. It carries out the reaction [protein]-peptidylproline (omega=180) = [protein]-peptidylproline (omega=0). In terms of biological role, involved in protein export. Acts as a chaperone by maintaining the newly synthesized protein in an open conformation. Functions as a peptidyl-prolyl cis-trans isomerase. This Gluconobacter oxydans (strain 621H) (Gluconobacter suboxydans) protein is Trigger factor.